The chain runs to 143 residues: Putative pre-16S rRNA nuclease (143 aa).

The protein belongs to the YqgF nuclease family.

It localises to the cytoplasm. In terms of biological role, could be a nuclease involved in processing of the 5'-end of pre-16S rRNA. The polypeptide is Putative pre-16S rRNA nuclease (Leuconostoc citreum (strain KM20)).